The primary structure comprises 388 residues: Beta-1,4-galactosyltransferase 5 (388 aa).

Over 1-14 (MRARRGLLRLPRRS) the chain is Cytoplasmic. The helical; Signal-anchor for type II membrane protein transmembrane segment at 15 to 35 (LLAALFFFSLSSSLLYFVYVA) threads the bilayer. Residues 36–388 (PGIVNTYLFM…TPELAQVTEY (353 aa)) are Lumenal-facing. 4 N-linked (GlcNAc...) asparagine glycosylation sites follow: N77, N81, N90, and N128. C114 and C158 are oxidised to a cystine. UDP-alpha-D-galactose-binding positions include 169 to 173 (PFRNR), 208 to 210 (FNR), 235 to 236 (VD), Y264, and W296. The cysteines at positions 229 and 248 are disulfide-linked. D236 contacts Mn(2+). N-acetyl-D-glucosamine is bound at residue 298 to 301 (GEDD). H329 contacts Mn(2+). 329-330 (HH) contacts UDP-alpha-D-galactose. R340 lines the N-acetyl-D-glucosamine pocket. N-linked (GlcNAc...) asparagine glycans are attached at residues N360, N364, and N373.

The protein belongs to the glycosyltransferase 7 family. The cofactor is Mn(2+). As to expression, highest levels in heart, brain, liver and kidney with lower levels in spleen, lung and testis.

It is found in the golgi apparatus. The protein resides in the golgi stack membrane. It carries out the reaction a beta-D-glucosyl-(1&lt;-&gt;1')-N-acylsphing-4-enine + UDP-alpha-D-galactose = a beta-D-Gal-(1-&gt;4)-beta-D-Glc-(1&lt;-&gt;1)-Cer(d18:1(4E)) + UDP + H(+). The protein operates within protein modification; protein glycosylation. It functions in the pathway sphingolipid metabolism. Its function is as follows. Catalyzes the synthesis of lactosylceramide (LacCer) via the transfer of galactose from UDP-galactose to glucosylceramide (GlcCer). LacCer is the starting point in the biosynthesis of all gangliosides (membrane-bound glycosphingolipids) which play pivotal roles in the CNS including neuronal maturation and axonal and myelin formation. Plays a role in the glycosylation of BMPR1A and regulation of its protein stability. Essential for extraembryonic development during early embryogenesis. The chain is Beta-1,4-galactosyltransferase 5 from Mus musculus (Mouse).